A 313-amino-acid polypeptide reads, in one-letter code: Carbamate kinase (313 aa).

It belongs to the carbamate kinase family.

The protein localises to the cytoplasm. It carries out the reaction hydrogencarbonate + NH4(+) + ATP = carbamoyl phosphate + ADP + H2O + H(+). It functions in the pathway metabolic intermediate metabolism; carbamoyl phosphate degradation; CO(2) and NH(3) from carbamoyl phosphate: step 1/1. In Oenococcus oeni (Leuconostoc oenos), this protein is Carbamate kinase (arcC).